The primary structure comprises 388 residues: Glucose-6-phosphate/phosphate translocator 1, chloroplastic (388 aa).

The transit peptide at 1–65 directs the protein to the chloroplast; it reads MVLSVKQTLS…LRAKSPVVRC (65 aa). 8 helical membrane passes run 95–115, 129–149, 158–178, 211–231, 233–253, 273–293, 305–325, and 363–383; these read LKIG…NIYN, STLS…VGIV, FWKT…AATV, FPTS…LSAL, ELNF…AFVF, YACL…AVEG, LATV…FYHL, and TPVQ…TFLY. Residues 112–229 form the EamA domain; it reads NIYNKKVLNA…IPIIGGCALS (118 aa).

This sequence belongs to the TPT transporter family. GPT (TC 2.A.7.9) subfamily. As to expression, expressed in seeds, flowers, rosette leaves, and roots, with highest levels found in stamens. Found in the root cap, in guard cells and in mesophyll cells.

The protein localises to the plastid. It is found in the chloroplast membrane. It localises to the endoplasmic reticulum membrane. The protein resides in the peroxisome membrane. Functionally, glucose 6-phosphate (Glc6P) transporter. Also transports inorganic phosphate, 3-phosphoglycerate, triose phosphates and, to a leser extent, phosphoenolpyruvate. Responsible for the transport of Glc6P into plastids of heterotrophic tissues where it can be used as a carbon source for starch biosynthesis, as substrate for fatty acid biosynthesis or as substrate for NADPH generation via the oxidative pentose phosphate pathway (OPPP). Required for pollen maturation and embryo sac development. Preferentially exchanges Glc6P for ribulose-5-phosphate (Ru5P) in reconstituted yeast proteoliposomes. May supply the substrate (Glc6P) for OPPP reactions inside peroxisomes and exchange it with the product Ru5P which leaves the organelle. This is Glucose-6-phosphate/phosphate translocator 1, chloroplastic from Arabidopsis thaliana (Mouse-ear cress).